The sequence spans 219 residues: Phosphatidylinositol phosphate synthase (219 aa).

29 to 32 (NQLT) contacts a CDP-1,2-diacyl-sn-glycerol. 2 helical membrane-spanning segments follow: residues 31–47 (LTLV…LLLI) and 53–72 (IWAA…DGTV). Positions 66 and 69 each coordinate Mg(2+). A CDP-1,2-diacyl-sn-glycerol contacts are provided by glycine 70, arginine 74, and threonine 80. Mg(2+)-binding residues include aspartate 87 and aspartate 91. Catalysis depends on aspartate 91, which acts as the Proton acceptor. 4 helical membrane passes run 93-110 (ITDG…VYSY), 116-133 (LVAA…ISYV), 154-171 (RLIV…GVPY), and 177-194 (LWAL…RLVM).

It belongs to the CDP-alcohol phosphatidyltransferase class-I family. Homodimer. Mg(2+) is required as a cofactor.

It localises to the cell membrane. The enzyme catalyses a CDP-1,2-diacyl-sn-glycerol + 1D-myo-inositol 3-phosphate = a 1,2-diacyl-sn-glycero-3-phospho-(1D-myo-inositol-3-phosphate) + CMP + H(+). It carries out the reaction 1,2-di-(9Z-octadecenoyl)-sn-glycero-3-cytidine-5'-diphosphate + 1D-myo-inositol 3-phosphate = 1,2-di-(9Z-octadecenoyl)-sn-glycero-3-phospho-(1D-myo-inositol-3-phosphate) + CMP + H(+). It functions in the pathway phospholipid metabolism; phosphatidylinositol phosphate biosynthesis. In terms of biological role, catalyzes the conjugation of the 1'-hydroxyl group of D-myo-inositol-3-phosphate (also named L-myo-inositol-1-phosphate) with a lipid tail of cytidine diphosphate diacylglycerol (CDP-DAG), forming phosphatidylinositol phosphate (PIP) and CMP. PIP is a precursor of phosphatidylinositol (PI) which is an essential lipid required for cell wall formation. This Corynebacterium glutamicum (strain ATCC 13032 / DSM 20300 / JCM 1318 / BCRC 11384 / CCUG 27702 / LMG 3730 / NBRC 12168 / NCIMB 10025 / NRRL B-2784 / 534) protein is Phosphatidylinositol phosphate synthase.